A 246-amino-acid chain; its full sequence is Myelin-oligodendrocyte glycoprotein (246 aa).

Positions 1–28 (MACLWSFSWPSCFLSLLLLLLQLSCSYA) are cleaved as a signal peptide. The Extracellular segment spans residues 29–156 (GQFRVIGPGY…FYWVNPGVLT (128 aa)). The Ig-like V-type domain occupies 31–144 (FRVIGPGYPI…EEAAMELKVE (114 aa)). Cys-52 and Cys-126 are oxidised to a cystine. N-linked (GlcNAc...) asparagine glycosylation is present at Asn-59. The helical transmembrane segment at 157-177 (LIALVPTILLQVPVGLVFLFL) threads the bilayer. The Cytoplasmic segment spans residues 178–209 (QHRLRGKLRAEVENLHRTFDPHFLRVPCWKIT). Residues 210–230 (LFVIVPVLGPLVALIICYNWL) traverse the membrane as a helical segment. Residues 231–246 (HRRLAGQFLEELRNPF) lie on the Extracellular side of the membrane.

This sequence belongs to the immunoglobulin superfamily. BTN/MOG family. As to quaternary structure, homodimer. In terms of tissue distribution, found exclusively in the CNS, where it is localized on the surface of myelin and oligodendrocyte cytoplasmic membranes. Reduced expression levels are observed in jimpy and quacking dysmyelinating mutant mice.

The protein resides in the membrane. Minor component of the myelin sheath. May be involved in completion and/or maintenance of the myelin sheath and in cell-cell communication. Mediates homophilic cell-cell adhesion. This is Myelin-oligodendrocyte glycoprotein (Mog) from Mus musculus (Mouse).